A 437-amino-acid chain; its full sequence is Trigger factor (437 aa).

Residues 163–248 enclose the PPIase FKBP-type domain; sequence GDRVIIDFEG…LNNVSEPTLP (86 aa).

It belongs to the FKBP-type PPIase family. Tig subfamily.

It localises to the cytoplasm. The enzyme catalyses [protein]-peptidylproline (omega=180) = [protein]-peptidylproline (omega=0). Involved in protein export. Acts as a chaperone by maintaining the newly synthesized protein in an open conformation. Functions as a peptidyl-prolyl cis-trans isomerase. In Neisseria gonorrhoeae (strain NCCP11945), this protein is Trigger factor.